A 490-amino-acid chain; its full sequence is Aspartyl/glutamyl-tRNA(Asn/Gln) amidotransferase subunit B (490 aa).

The protein belongs to the GatB/GatE family. GatB subfamily. Heterotrimer of A, B and C subunits.

The catalysed reaction is L-glutamyl-tRNA(Gln) + L-glutamine + ATP + H2O = L-glutaminyl-tRNA(Gln) + L-glutamate + ADP + phosphate + H(+). It carries out the reaction L-aspartyl-tRNA(Asn) + L-glutamine + ATP + H2O = L-asparaginyl-tRNA(Asn) + L-glutamate + ADP + phosphate + 2 H(+). Its function is as follows. Allows the formation of correctly charged Asn-tRNA(Asn) or Gln-tRNA(Gln) through the transamidation of misacylated Asp-tRNA(Asn) or Glu-tRNA(Gln) in organisms which lack either or both of asparaginyl-tRNA or glutaminyl-tRNA synthetases. The reaction takes place in the presence of glutamine and ATP through an activated phospho-Asp-tRNA(Asn) or phospho-Glu-tRNA(Gln). The protein is Aspartyl/glutamyl-tRNA(Asn/Gln) amidotransferase subunit B of Methylorubrum extorquens (strain CM4 / NCIMB 13688) (Methylobacterium extorquens).